Reading from the N-terminus, the 537-residue chain is O-phosphoserine--tRNA(Cys) ligase (537 aa).

Residues 186–188, 231–233, 273–274, and Asn-317 each bind substrate; these read HMT, SAS, and YY.

It belongs to the class-II aminoacyl-tRNA synthetase family. O-phosphoseryl-tRNA(Cys) synthetase subfamily. As to quaternary structure, homotetramer. Interacts with SepCysS.

The enzyme catalyses tRNA(Cys) + O-phospho-L-serine + ATP = O-phospho-L-seryl-tRNA(Cys) + AMP + diphosphate. Functionally, catalyzes the attachment of O-phosphoserine (Sep) to tRNA(Cys). This is O-phosphoserine--tRNA(Cys) ligase from Methanococcus maripaludis (strain C7 / ATCC BAA-1331).